Reading from the N-terminus, the 238-residue chain is Ribonuclease 3 (238 aa).

One can recognise an RNase III domain in the interval 4 to 127 (IEEFEKRLGY…TMGAIYLETG (124 aa)). Glu-40 is a binding site for Mg(2+). Residue Asp-44 is part of the active site. 2 residues coordinate Mg(2+): Asn-113 and Glu-116. Glu-116 is an active-site residue. The DRBM domain occupies 154–223 (DYKTALQELT…ARIALEIFHR (70 aa)).

It belongs to the ribonuclease III family. Homodimer. The cofactor is Mg(2+).

Its subcellular location is the cytoplasm. The enzyme catalyses Endonucleolytic cleavage to 5'-phosphomonoester.. Its function is as follows. Digests double-stranded RNA. Involved in the processing of primary rRNA transcript to yield the immediate precursors to the large and small rRNAs (23S and 16S). Processes some mRNAs, and tRNAs when they are encoded in the rRNA operon. Processes pre-crRNA and tracrRNA of type II CRISPR loci if present in the organism. This is Ribonuclease 3 from Wolinella succinogenes (strain ATCC 29543 / DSM 1740 / CCUG 13145 / JCM 31913 / LMG 7466 / NCTC 11488 / FDC 602W) (Vibrio succinogenes).